The sequence spans 138 residues: Transcription factor Atoh7-a (138 aa).

Residues 33 to 85 (KRRLAANARERRRMQGLNTAFDSLRKVVPQWGEDKQLSKYETLQMALSYIMAL) enclose the bHLH domain.

It is found in the nucleus. Its subcellular location is the perikaryon. The protein localises to the cell projection. The protein resides in the axon. Its function is as follows. Transcription factor that binds to DNA at the consensus sequence 5'-CAG[GC]TG-3'. Positively regulates the determination of retinal ganglion cell fate and formation of the optic nerve and retino-hypothalamic tract. Required for retinal circadian rhythm photoentrainment. Plays a role in brainstem auditory signaling and binaural processing. Regulates the differentiation of olfactory receptor neurons. During retinal neurogenesis, activates the transcription of several genes such as brn3d, coe3, cbfa2t2, glis2, elrC and xgadd45-gamma. The chain is Transcription factor Atoh7-a from Xenopus laevis (African clawed frog).